Reading from the N-terminus, the 359-residue chain is Phospho-N-acetylmuramoyl-pentapeptide-transferase (359 aa).

A run of 10 helical transmembrane segments spans residues 3-23 (QILI…PVLI), 55-75 (VAIV…GVVI), 84-104 (GLLV…DDLI), 117-137 (TAKT…ALQF), 156-176 (IATV…VVSA), 190-210 (LAAG…FWQF), 231-251 (LAII…WNAA), 255-275 (IFMG…LSVT), 283-303 (VVLG…ILAF), and 330-350 (VIIR…ALFY).

Belongs to the glycosyltransferase 4 family. MraY subfamily. Mg(2+) is required as a cofactor.

It is found in the cell membrane. The catalysed reaction is UDP-N-acetyl-alpha-D-muramoyl-L-alanyl-gamma-D-glutamyl-meso-2,6-diaminopimeloyl-D-alanyl-D-alanine + di-trans,octa-cis-undecaprenyl phosphate = di-trans,octa-cis-undecaprenyl diphospho-N-acetyl-alpha-D-muramoyl-L-alanyl-D-glutamyl-meso-2,6-diaminopimeloyl-D-alanyl-D-alanine + UMP. It functions in the pathway cell wall biogenesis; peptidoglycan biosynthesis. Functionally, catalyzes the initial step of the lipid cycle reactions in the biosynthesis of the cell wall peptidoglycan: transfers peptidoglycan precursor phospho-MurNAc-pentapeptide from UDP-MurNAc-pentapeptide onto the lipid carrier undecaprenyl phosphate, yielding undecaprenyl-pyrophosphoryl-MurNAc-pentapeptide, known as lipid I. This chain is Phospho-N-acetylmuramoyl-pentapeptide-transferase, found in Mycolicibacterium vanbaalenii (strain DSM 7251 / JCM 13017 / BCRC 16820 / KCTC 9966 / NRRL B-24157 / PYR-1) (Mycobacterium vanbaalenii).